The following is a 266-amino-acid chain: MTMEVDILELSDRSAKFVLSRVSMAFANGVRRAMIADVPTLAIEYVNLYDNTSVLYDEQLALRLSLIPLVTDIETYMPQAECEVCGGEGCPACEVSLTLSAEGPGTVYSRDLISSDPKIQPADPNIPIVELKKGQKLVLEAIAHMGYGRDSVKWQAGVACGYKNVPVITIENCDACGHCAAECPKGIIRVEEAGARIAEDDLIKCSLCRLCEQVCDINAIKVDFYENAFVFTMESDGSYTAKDLTINAANVIKGKAEELLAILDQL.

3 residues coordinate [3Fe-4S] cluster: C205, C208, and C211.

The protein belongs to the archaeal Rpo3/eukaryotic RPB3 RNA polymerase subunit family. Part of the RNA polymerase complex. [3Fe-4S] cluster serves as cofactor.

The protein resides in the cytoplasm. It carries out the reaction RNA(n) + a ribonucleoside 5'-triphosphate = RNA(n+1) + diphosphate. DNA-dependent RNA polymerase (RNAP) catalyzes the transcription of DNA into RNA using the four ribonucleoside triphosphates as substrates. This chain is DNA-directed RNA polymerase subunit Rpo3, found in Methanosarcina mazei (strain ATCC BAA-159 / DSM 3647 / Goe1 / Go1 / JCM 11833 / OCM 88) (Methanosarcina frisia).